Consider the following 287-residue polypeptide: Histone H1 (287 aa).

The segment covering 1-11 (MATEEPVIVNE) has biased composition (low complexity). Disordered stretches follow at residues 1 to 58 (MATE…THPP) and 120 to 287 (YKLP…RGRK). Basic residues predominate over residues 33-51 (GKAKKETKAKKPAAPRKRS). Positions 55 to 124 (THPPYFEMIK…KVKNSYKLPS (70 aa)) constitute an H15 domain. Basic residues predominate over residues 135–202 (AKKKPAAAKS…KAKPVAKAKP (68 aa)). Positions 203–248 (KAAAAAKPKAAVKPKAAPAKTKAAVKPNLKAKTTTAKVAKTATRTT) are enriched in low complexity. Basic residues predominate over residues 276 to 287 (PAKKATPKRGRK).

Belongs to the histone H1/H5 family.

It localises to the nucleus. The protein resides in the chromosome. Histones H1 are necessary for the condensation of nucleosome chains into higher-order structures. The chain is Histone H1 from Solanum lycopersicum (Tomato).